The chain runs to 222 residues: Lipid transferase CIDEC (222 aa).

Over residues 1-19 the composition is skewed to polar residues; sequence MAMYTAVSTSVVTQQQLSE. Disordered regions lie at residues 1–33 and 203–222; these read MAMY…CRVT and EQPP…KMLQ. The required for liquid-liquid phase separation (LLPS) stretch occupies residues 1-33; it reads MAMYTAVSTSVVTQQQLSEPSAEAPRARPCRVT. The CIDE-N domain maps to 26–103; the sequence is RARPCRVTTA…VLHKGQKWQP (78 aa).

This sequence belongs to the CIDE family. Homodimer. Homooligomer; undergoes liquid-liquid phase separation (LLPS) via its N-terminus, facilitating lipid droplet fusion, occurs at the lipid droplet contact sites. Interacts with CIDEA. Interacts with PLIN1. Interacts with NFAT5; this interaction is direct and retains NFAT5 in the cytoplasm. Interacts with CEBPB. Interacts with isoform CLSTN3beta of CLSTN3; inhibiting the lipid transferase activity of CIDEC. In terms of processing, ubiquitinated and targeted to proteasomal degradation, resulting in a short half-life (about 15 minutes in 3T3-L1 cells). Protein stability depends on triaclyglycerol synthesis, fatty acid availability and lipid droplet formation.

The protein resides in the lipid droplet. It localises to the endoplasmic reticulum. Its subcellular location is the nucleus. It catalyses the reaction a triacyl-sn-glycerol(in) = a triacyl-sn-glycerol(out). In terms of biological role, lipid transferase specifically expressed in white adipose tissue, which promotes unilocular lipid droplet formation by mediating lipid droplet fusion. Lipid droplet fusion promotes their enlargement, restricting lipolysis and favoring lipid storage. Localizes on the lipid droplet surface, at focal contact sites between lipid droplets, and mediates atypical lipid droplet fusion by undergoing liquid-liquid phase separation (LLPS) and promoting directional net neutral lipid transfer from the smaller to larger lipid droplets. The transfer direction may be driven by the internal pressure difference between the contacting lipid droplet pair. Its role in neutral lipid transfer and lipid droplet enlargement is activated by the interaction with PLIN1. May also act as a CEBPB coactivator in the white adipose tissue to control the expression of a subset of CEBPB downstream target genes, including SOCS1, SOCS3, TGFB1, TGFBR1, ID2 and XDH. When overexpressed in preadipocytes, induces apoptosis or increases cell susceptibility to apoptosis induced by serum deprivation or TGFB treatment. The protein is Lipid transferase CIDEC of Bos taurus (Bovine).